A 372-amino-acid chain; its full sequence is Probable NADH-dependent flavin oxidoreductase YqiG (372 aa).

It belongs to the NADH:flavin oxidoreductase/NADH oxidase family.

In Bacillus subtilis (strain 168), this protein is Probable NADH-dependent flavin oxidoreductase YqiG (yqiG).